We begin with the raw amino-acid sequence, 225 residues long: Shikimate kinase (225 aa).

Residue 27–32 coordinates ATP; the sequence is GAGKTT. T31 provides a ligand contact to Mg(2+). Residues D49, R73, and G95 each coordinate substrate. R132 contributes to the ATP binding site. R150 lines the substrate pocket. Positions 186–225 are disordered; the sequence is GGSEPDEAADAAGGSEPDEAADAAGGSEPDEAADAAGGKR.

The protein belongs to the shikimate kinase family. As to quaternary structure, monomer. The cofactor is Mg(2+).

The protein localises to the cytoplasm. The enzyme catalyses shikimate + ATP = 3-phosphoshikimate + ADP + H(+). Its pathway is metabolic intermediate biosynthesis; chorismate biosynthesis; chorismate from D-erythrose 4-phosphate and phosphoenolpyruvate: step 5/7. In terms of biological role, catalyzes the specific phosphorylation of the 3-hydroxyl group of shikimic acid using ATP as a cosubstrate. The sequence is that of Shikimate kinase from Frankia casuarinae (strain DSM 45818 / CECT 9043 / HFP020203 / CcI3).